The chain runs to 558 residues: MSPTALDACDHHDSFSLPAQDQSKVHPSARRTPEGGLIKVESDSTVYEADGIKAKFTDRGASVIKGSDGKLSVKKTEKNFEFFTKSTVGRVGLMLVGLGGNNGTTVLATNLANKYNISWHTKNGIQQPNYIGSVVRASTVRLGTDPETGKDVFVPISDMLPMVHPNDFVIGGWDISSLSMDKAMLRAKVLEWDLQRQLIPLMENVKPLPSIYYPDFIAANQADRADNLIPGDDKKVHLEHIRADIRRFKADNHLDSVVVLWTANTERYADIIPGVNDTADNLLKAVETSHEEVSPSTIFAMASILEGVPFINGSPQNTFVPGCIELAEKHKAFIGGDDFKSGQTKVKSVLAEFLVNAGIKPLSISSYNHLGNNDGKNLSSQRQFRSKEISKSSVVDDMVAANPILYKTAEDLSKATGEIVKKGEHPDHIVVIKHVPAVGDSKRAIDEYYSELLMGGRNVMNIFNECEDSLLATPLIFDLAILAELLTRVTYRENATGEWQPLYSVLSLLSYMLKAPLVKPGEDVVNSLNRQRNALEQFLKACLGLEHSNDLLLNTRVW.

Residues 1-34 (MSPTALDACDHHDSFSLPAQDQSKVHPSARRTPE) form a disordered region. Residues G99, G100, N101, N102, D174, S210, I211, Q221, R224, T262, A263, N264, T265, G313, S314, D338, S341, N372, N373, D374, K387, G439, D440, D468, and S469 each contribute to the NAD(+) site.

This sequence belongs to the myo-inositol 1-phosphate synthase family. Homotetramer. NAD(+) is required as a cofactor.

It localises to the cytoplasm. The catalysed reaction is D-glucose 6-phosphate = 1D-myo-inositol 3-phosphate. It functions in the pathway polyol metabolism; myo-inositol biosynthesis; myo-inositol from D-glucose 6-phosphate: step 1/2. Functionally, key enzyme in myo-inositol biosynthesis pathway that catalyzes the conversion of glucose 6-phosphate to 1-myo-inositol 1-phosphate in a NAD-dependent manner. Rate-limiting enzyme in the synthesis of all inositol-containing compounds. This is Inositol-3-phosphate synthase from Cryptococcus neoformans var. grubii serotype A (strain H99 / ATCC 208821 / CBS 10515 / FGSC 9487) (Filobasidiella neoformans var. grubii).